A 148-amino-acid chain; its full sequence is UPF0260 protein YPK_2117 (148 aa).

Belongs to the UPF0260 family.

In Yersinia pseudotuberculosis serotype O:3 (strain YPIII), this protein is UPF0260 protein YPK_2117.